The chain runs to 96 residues: Antitoxin TacA3 (96 aa).

Residues tyrosine 61 to lysine 96 are neutralization domain.

This sequence belongs to the TacA antitoxin family. In terms of assembly, forms a complex with cognate toxin TacT3. Forms a 4:2 antitoxin:toxin complex with cognate toxin TacT3. Forms a 4:4 antitoxin:toxin complex with promoter DNA, where 2 TacT3 dimers bridge 2 TacA3 dimers. Only TacA3 contacts promoter DNA.

In terms of biological role, antitoxin component of a type II toxin-antitoxin (TA) system. Counteracts the toxic effect of cognate toxin TacT3, but not TacT1 or TacT2. Plays a role in persister cell formation. Functionally, the TacA3-TacT3 complex both represses and derepresses expression of its own operon. The hexameric 4:2 TacA3-TacT3 complex binds promoter DNA and represses its transcription; both subunits are required. The octomeric 4:4 TacA3-TacT3 complex derepresses the operon. The shift from hexameric to octomeric complex probably alters DNA-binding, leading to dissociation from the operator DNA and derepression. Does not bind the promoter of the TacA1-TacT1 operon. The polypeptide is Antitoxin TacA3 (Salmonella typhimurium (strain 14028s / SGSC 2262)).